The following is a 369-amino-acid chain: Aminomethyltransferase (369 aa).

This sequence belongs to the GcvT family. In terms of assembly, the glycine cleavage system is composed of four proteins: P, T, L and H.

It catalyses the reaction N(6)-[(R)-S(8)-aminomethyldihydrolipoyl]-L-lysyl-[protein] + (6S)-5,6,7,8-tetrahydrofolate = N(6)-[(R)-dihydrolipoyl]-L-lysyl-[protein] + (6R)-5,10-methylene-5,6,7,8-tetrahydrofolate + NH4(+). The glycine cleavage system catalyzes the degradation of glycine. This chain is Aminomethyltransferase, found in Xanthomonas campestris pv. campestris (strain 8004).